We begin with the raw amino-acid sequence, 411 residues long: LL-diaminopimelate aminotransferase (411 aa).

Substrate contacts are provided by tyrosine 15 and glycine 42. Pyridoxal 5'-phosphate-binding positions include tyrosine 72, 108-109 (SK), tyrosine 132, asparagine 187, tyrosine 218, and 246-248 (SFS). 3 residues coordinate substrate: lysine 109, tyrosine 132, and asparagine 187. An N6-(pyridoxal phosphate)lysine modification is found at lysine 249. Residues arginine 257 and asparagine 292 each contribute to the pyridoxal 5'-phosphate site. Positions 292 and 388 each coordinate substrate.

This sequence belongs to the class-I pyridoxal-phosphate-dependent aminotransferase family. LL-diaminopimelate aminotransferase subfamily. Homodimer. Pyridoxal 5'-phosphate serves as cofactor.

It carries out the reaction (2S,6S)-2,6-diaminopimelate + 2-oxoglutarate = (S)-2,3,4,5-tetrahydrodipicolinate + L-glutamate + H2O + H(+). It participates in amino-acid biosynthesis; L-lysine biosynthesis via DAP pathway; LL-2,6-diaminopimelate from (S)-tetrahydrodipicolinate (aminotransferase route): step 1/1. Involved in the synthesis of meso-diaminopimelate (m-DAP or DL-DAP), required for both lysine and peptidoglycan biosynthesis. Catalyzes the direct conversion of tetrahydrodipicolinate to LL-diaminopimelate. The sequence is that of LL-diaminopimelate aminotransferase from Synechococcus sp. (strain JA-3-3Ab) (Cyanobacteria bacterium Yellowstone A-Prime).